Consider the following 255-residue polypeptide: tRNA (guanine-N(1)-)-methyltransferase (255 aa).

S-adenosyl-L-methionine-binding positions include Gly119 and Ile139–Leu144.

It belongs to the RNA methyltransferase TrmD family. In terms of assembly, homodimer.

It is found in the cytoplasm. The catalysed reaction is guanosine(37) in tRNA + S-adenosyl-L-methionine = N(1)-methylguanosine(37) in tRNA + S-adenosyl-L-homocysteine + H(+). Functionally, specifically methylates guanosine-37 in various tRNAs. The sequence is that of tRNA (guanine-N(1)-)-methyltransferase from Pseudoalteromonas translucida (strain TAC 125).